The sequence spans 130 residues: Odontogenesis associated phosphoprotein (130 aa).

Residues M1–G23 form the signal peptide.

As to expression, highly expressed in placenta.

It localises to the secreted. In terms of biological role, may promote nucleation of hydroxyapatite. This chain is Odontogenesis associated phosphoprotein, found in Homo sapiens (Human).